Reading from the N-terminus, the 266-residue chain is Translation initiation factor 2 subunit alpha (266 aa).

Residues 12 to 83 (GEILIATVKQ…RKGTVDVSLK (72 aa)) form the S1 motif domain.

Belongs to the eIF-2-alpha family. Heterotrimer composed of an alpha, a beta and a gamma chain.

Functionally, eIF-2 functions in the early steps of protein synthesis by forming a ternary complex with GTP and initiator tRNA. In Saccharolobus islandicus (strain L.S.2.15 / Lassen #1) (Sulfolobus islandicus), this protein is Translation initiation factor 2 subunit alpha.